The following is a 308-amino-acid chain: Ribosomal RNA small subunit methyltransferase H (308 aa).

S-adenosyl-L-methionine is bound by residues 35–37, aspartate 55, phenylalanine 79, aspartate 100, and glutamine 107; that span reads GGH.

It belongs to the methyltransferase superfamily. RsmH family.

It is found in the cytoplasm. The catalysed reaction is cytidine(1402) in 16S rRNA + S-adenosyl-L-methionine = N(4)-methylcytidine(1402) in 16S rRNA + S-adenosyl-L-homocysteine + H(+). In terms of biological role, specifically methylates the N4 position of cytidine in position 1402 (C1402) of 16S rRNA. In Dechloromonas aromatica (strain RCB), this protein is Ribosomal RNA small subunit methyltransferase H.